Reading from the N-terminus, the 304-residue chain is Acetaldehyde dehydrogenase 4 (304 aa).

Catalysis depends on Cys131, which acts as the Acyl-thioester intermediate. NAD(+)-binding positions include 162-170 and Asn273; that span reads SAGPGTRKN.

Belongs to the acetaldehyde dehydrogenase family. As to quaternary structure, heterotetramer composed of two BphI (aldolase) and two BphJ (dehydrogenase).

The catalysed reaction is acetaldehyde + NAD(+) + CoA = acetyl-CoA + NADH + H(+). It carries out the reaction propanal + NAD(+) + CoA = propanoyl-CoA + NADH + H(+). It functions in the pathway xenobiotic degradation; polychlorinated biphenyl degradation. With respect to regulation, bound pyruvate or other intermediates in the aldol addition reaction catalyzed by BphI allosterically activates BphJ reductive deacylation activity. Its function is as follows. Catalyzes the conversion of acetaldehyde or propanal to acetyl-CoA or propanoyl-CoA, respectively, using NAD(+) and coenzyme A. Displays broad specificity since it can utilize aliphatic aldehydes from two to five carbons in length as substrates; the aldehyde substrates can be directly channeled from the aldolase BphI to the dehydrogenase BphJ. Is the final enzyme in the meta-cleavage pathway for the degradation of polychlorinated biphenyls (PCBs). Is also able to utilize NADP(+) instead of NAD(+). Is not active with succinic semialdehyde or picolinaldehyde as substrates. Can also catalyze the reverse reaction, i.e. the reductive deacylation of acetyl-CoA to acetaldehyde, which is then channeled to the BphI active site. The BphI-BphJ enzyme complex exhibits unique bidirectionality in substrate channeling and allosteric activation. This chain is Acetaldehyde dehydrogenase 4 (bphJ), found in Paraburkholderia xenovorans (strain LB400).